The chain runs to 214 residues: Pyrrolidone-carboxylate peptidase (214 aa).

Catalysis depends on residues Glu-78, Cys-141, and His-165.

It belongs to the peptidase C15 family. Homotetramer.

It localises to the cytoplasm. It catalyses the reaction Release of an N-terminal pyroglutamyl group from a polypeptide, the second amino acid generally not being Pro.. In terms of biological role, removes 5-oxoproline from various penultimate amino acid residues except L-proline. The chain is Pyrrolidone-carboxylate peptidase from Streptococcus pneumoniae serotype 2 (strain D39 / NCTC 7466).